The sequence spans 125 residues: Large ribosomal subunit protein bL12 (125 aa).

Belongs to the bacterial ribosomal protein bL12 family. Homodimer. Part of the ribosomal stalk of the 50S ribosomal subunit. Forms a multimeric L10(L12)X complex, where L10 forms an elongated spine to which 2 to 4 L12 dimers bind in a sequential fashion. Binds GTP-bound translation factors.

Functionally, forms part of the ribosomal stalk which helps the ribosome interact with GTP-bound translation factors. Is thus essential for accurate translation. The sequence is that of Large ribosomal subunit protein bL12 from Thioalkalivibrio sulfidiphilus (strain HL-EbGR7).